A 115-amino-acid chain; its full sequence is uncharacterized protein (115 aa).

This is an uncharacterized protein from Haemophilus influenzae (strain ATCC 51907 / DSM 11121 / KW20 / Rd).